Consider the following 694-residue polypeptide: Glycine--tRNA ligase beta subunit (694 aa).

Belongs to the class-II aminoacyl-tRNA synthetase family. Tetramer of two alpha and two beta subunits.

It is found in the cytoplasm. It carries out the reaction tRNA(Gly) + glycine + ATP = glycyl-tRNA(Gly) + AMP + diphosphate. In Moorella thermoacetica (strain ATCC 39073 / JCM 9320), this protein is Glycine--tRNA ligase beta subunit.